A 414-amino-acid polypeptide reads, in one-letter code: Serine/threonine transporter SstT (414 aa).

Transmembrane regions (helical) follow at residues 16–36 (GSLV…AWIS), 46–66 (LGTL…LMLV), 84–104 (ILFL…VFSF), 143–163 (ALLN…GFAL), 180–200 (AVTF…FGLV), 219–239 (LVVL…LLVF), 300–320 (MAGA…TLGV), and 332–352 (VVAS…LLLI).

This sequence belongs to the dicarboxylate/amino acid:cation symporter (DAACS) (TC 2.A.23) family.

It is found in the cell inner membrane. It carries out the reaction L-serine(in) + Na(+)(in) = L-serine(out) + Na(+)(out). The catalysed reaction is L-threonine(in) + Na(+)(in) = L-threonine(out) + Na(+)(out). Functionally, involved in the import of serine and threonine into the cell, with the concomitant import of sodium (symport system). The polypeptide is Serine/threonine transporter SstT (Salmonella agona (strain SL483)).